Consider the following 234-residue polypeptide: Putative N-acetylmannosamine-6-phosphate 2-epimerase (234 aa).

The protein belongs to the NanE family.

It catalyses the reaction an N-acyl-D-glucosamine 6-phosphate = an N-acyl-D-mannosamine 6-phosphate. It participates in amino-sugar metabolism; N-acetylneuraminate degradation; D-fructose 6-phosphate from N-acetylneuraminate: step 3/5. Functionally, converts N-acetylmannosamine-6-phosphate (ManNAc-6-P) to N-acetylglucosamine-6-phosphate (GlcNAc-6-P). The sequence is that of Putative N-acetylmannosamine-6-phosphate 2-epimerase from Klebsiella pneumoniae subsp. pneumoniae (strain ATCC 700721 / MGH 78578).